The primary structure comprises 268 residues: Tryptophan synthase alpha chain (268 aa).

Residues glutamate 49 and aspartate 60 each act as proton acceptor in the active site.

Belongs to the TrpA family. Tetramer of two alpha and two beta chains.

It catalyses the reaction (1S,2R)-1-C-(indol-3-yl)glycerol 3-phosphate + L-serine = D-glyceraldehyde 3-phosphate + L-tryptophan + H2O. It participates in amino-acid biosynthesis; L-tryptophan biosynthesis; L-tryptophan from chorismate: step 5/5. The alpha subunit is responsible for the aldol cleavage of indoleglycerol phosphate to indole and glyceraldehyde 3-phosphate. This Sodalis glossinidius (strain morsitans) protein is Tryptophan synthase alpha chain.